A 706-amino-acid polypeptide reads, in one-letter code: MMELEGEKPNYGEPRKYDPTFKGPIYNRGCTDIVCCIFFIICILGYVAVGILAWSQGDPRKVIYPTDSRGQFCGQAGTPLETKPLLFYFNIMKCASPMVLLEFQCPTTQMCVEKCPDKFMTLLKAYANKEDFKYYKNFCKEGLEGLTVTQILSSGLCPAMLTPSKPFTRRCFPALDQKKGGEITVGNNSKFDDGEGNIRDAKDLVAGVKNATVVIEARQVVMKIFEDYTQSWYWILIGLVIAMLISLLFIVLLRFLAGIMVWVMIVMVILVIGYGIFHCSMEYVSLKSEAGSNVTLKDLGFQTDFSVYLHIRQTWLAFIIILAIVEVVIILLLIFLRNRILIAIALIKEASRAIGYVMSALFYPLFTFALLSIVIAYWAVTAVFLSTSNQPIYKVFNDTACDHSRKICEPANFSTSSMKAECPDSKCLFAFYGGETVYHKYLIGLQFYNVFLFFWCANFVTALGQMTLAGAFASYYWALVKPDDMPAFPIFSSLGRSLRYHTGSLAFGSLILSIIQIIRVLLEYIDHKLQGTQNKCTKFLLCCLKCCFWCLEKFIKFINRNAYIMVAIYGKNFCTSAKDAFFLLMRNMIRVAVLDKVTDFLLFLGKLLIVGLVGIFAFFFFSGRVKAFENTAPNLHYYWVPILTVVVGSYLIAHGFFSVYAMCVDTLFLCFLEDLERNDGSAERPYLMSDRLLKVLNKKNKPEPAE.

Residues 1-32 (MMELEGEKPNYGEPRKYDPTFKGPIYNRGCTD) are Cytoplasmic-facing. Residues 33 to 53 (IVCCIFFIICILGYVAVGILA) traverse the membrane as a helical segment. The Extracellular segment spans residues 54–232 (WSQGDPRKVI…KIFEDYTQSW (179 aa)). N-linked (GlcNAc...) asparagine glycans are attached at residues Asn-187 and Asn-210. The helical transmembrane segment at 233 to 253 (YWILIGLVIAMLISLLFIVLL) threads the bilayer. Residues 254-256 (RFL) are Cytoplasmic-facing. A helical transmembrane segment spans residues 257–277 (AGIMVWVMIVMVILVIGYGIF). Residues 278–315 (HCSMEYVSLKSEAGSNVTLKDLGFQTDFSVYLHIRQTW) are Extracellular-facing. A glycan (N-linked (GlcNAc...) asparagine) is linked at Asn-293. Residues 316–336 (LAFIIILAIVEVVIILLLIFL) form a helical membrane-spanning segment. Over 337-364 (RNRILIAIALIKEASRAIGYVMSALFYP) the chain is Cytoplasmic. A helical membrane pass occupies residues 365-385 (LFTFALLSIVIAYWAVTAVFL). The Extracellular portion of the chain corresponds to 386–454 (STSNQPIYKV…LQFYNVFLFF (69 aa)). Asn-397 and Asn-412 each carry an N-linked (GlcNAc...) asparagine glycan. Residues 455–477 (WCANFVTALGQMTLAGAFASYYW) traverse the membrane as a helical segment. Topologically, residues 478-504 (ALVKPDDMPAFPIFSSLGRSLRYHTGS) are cytoplasmic. The chain crosses the membrane as a helical span at residues 505-525 (LAFGSLILSIIQIIRVLLEYI). Topologically, residues 526–599 (DHKLQGTQNK…RVAVLDKVTD (74 aa)) are extracellular. A helical transmembrane segment spans residues 600-620 (FLLFLGKLLIVGLVGIFAFFF). The Cytoplasmic segment spans residues 621–638 (FSGRVKAFENTAPNLHYY). The chain crosses the membrane as a helical span at residues 639–659 (WVPILTVVVGSYLIAHGFFSV). The Extracellular portion of the chain corresponds to 660 to 706 (YAMCVDTLFLCFLEDLERNDGSAERPYLMSDRLLKVLNKKNKPEPAE).

It belongs to the CTL (choline transporter-like) family.

The protein localises to the cell membrane. It localises to the mitochondrion outer membrane. It carries out the reaction choline(out) + n H(+)(in) = choline(in) + n H(+)(out). The enzyme catalyses ethanolamine(out) + n H(+)(in) = ethanolamine(in) + n H(+)(out). Functionally, choline/H+ antiporter, mainly in mitochodria. Also acts as a low-affinity ethanolamine/H+ antiporter, regulating the supply of extracellular ethanolamine (Etn) for the CDP-Etn pathway, redistribute intracellular Etn and balance the CDP-Cho and CDP-Etn arms of the Kennedy pathway. The protein is Choline transporter-like protein 2 (slc44a2) of Salmo salar (Atlantic salmon).